Consider the following 92-residue polypeptide: MGCCGCGSCGCSGGCGGGCGGGCGGGCGSCTTCRCYRVGCCSSCCPCCRGCCGGCCSTPVICCCRRTCSSCGCGCGKGCCQQKSCCQKQCCC.

The 11 X 2 AA repeats of CG stretch occupies residues Cys4–Gly72.

It belongs to the KRTAP type 28 family.

In terms of biological role, in the hair cortex, hair keratin intermediate filaments are embedded in an interfilamentous matrix, consisting of hair keratin-associated proteins (KRTAP), which are essential for the formation of a rigid and resistant hair shaft through their extensive disulfide bond cross-linking with abundant cysteine residues of hair keratins. The matrix proteins include the high-sulfur and high-glycine-tyrosine keratins. The sequence is that of Small cysteine and glycine repeat-containing protein 9 from Homo sapiens (Human).